Reading from the N-terminus, the 158-residue chain is Phosphopantetheine adenylyltransferase (158 aa).

Thr8 provides a ligand contact to substrate. Residues Thr8 to Phe9 and His16 each bind ATP. 3 residues coordinate substrate: Lys40, Leu72, and Arg86. ATP is bound by residues Gly87–Arg89, Glu97, and His122–Ser128.

Belongs to the bacterial CoaD family. Homohexamer. The cofactor is Mg(2+).

It is found in the cytoplasm. It catalyses the reaction (R)-4'-phosphopantetheine + ATP + H(+) = 3'-dephospho-CoA + diphosphate. Its pathway is cofactor biosynthesis; coenzyme A biosynthesis; CoA from (R)-pantothenate: step 4/5. Reversibly transfers an adenylyl group from ATP to 4'-phosphopantetheine, yielding dephospho-CoA (dPCoA) and pyrophosphate. The protein is Phosphopantetheine adenylyltransferase of Campylobacter jejuni subsp. jejuni serotype O:6 (strain 81116 / NCTC 11828).